Here is a 515-residue protein sequence, read N- to C-terminus: Envelope glycoprotein (515 aa).

A signal peptide spans 1–33 (MPKERRSRRRPQPIIRWVSLTLTLLALCQPIQT). Topologically, residues 34–435 (WRCSLSLGNQ…LGLTAWVRET (402 aa)) are extracellular. 2 N-linked (GlcNAc...) asparagine; by host glycosylation sites follow: asparagine 129 and asparagine 203. The CXXC signature appears at 212-215 (CAIC). 3 disulfides stabilise this stretch: cysteine 212–cysteine 215, cysteine 212–cysteine 392, and cysteine 384–cysteine 391. N-linked (GlcNAc...) asparagine; by host glycosylation is found at asparagine 230, asparagine 251, asparagine 256, asparagine 271, and asparagine 287. Residues 304 to 324 (VAALTLGLALSVGLTGINVAV) form a fusion peptide region. 2 coiled-coil regions span residues 330–376 (QRLT…WLYI) and 388–420 (NEPC…DWQW). The N-linked (GlcNAc...) asparagine; by host glycan is linked to asparagine 351. The segment at 365–381 (AQNRRGLDWLYIRLGFQ) is immunosuppression. The short motif at 384–392 (CPTINEPCC) is the CX6CC element. Asparagine 398 is a glycosylation site (N-linked (GlcNAc...) asparagine; by host). A helical membrane pass occupies residues 436–456 (IHSVLSLFLLALFLLFLAPCL). The S-palmitoyl cysteine; by host moiety is linked to residue cysteine 455. The Cytoplasmic segment spans residues 457-515 (IKCLTSRLLKLLRQAPHFPEISFPPKPDSDYQALLPSAPEIYSHLSPTKPDYINLRPCP).

The mature envelope protein (Env) consists of a trimer of SU-TM heterodimers attached by a labile interchain disulfide bond. Specific enzymatic cleavages in vivo yield mature proteins. Envelope glycoproteins are synthesized as an inactive precursor that is N-glycosylated and processed likely by host cell furin or by a furin-like protease in the Golgi to yield the mature SU and TM proteins. The cleavage site between SU and TM requires the minimal sequence [KR]-X-[KR]-R. In terms of processing, the CXXC motif is highly conserved across a broad range of retroviral envelope proteins. It is thought to participate in the formation of a labile disulfide bond possibly with the CX6CC motif present in the transmembrane protein. Isomerization of the intersubunit disulfide bond to an SU intrachain disulfide bond is thought to occur upon receptor recognition in order to allow membrane fusion. Post-translationally, the transmembrane protein is palmitoylated.

Its subcellular location is the virion membrane. The protein localises to the host cell membrane. Its function is as follows. The surface protein (SU) attaches the virus to the host cell by binding to its receptor. This interaction triggers the refolding of the transmembrane protein (TM) and is thought to activate its fusogenic potential by unmasking its fusion peptide. Fusion occurs at the host cell plasma membrane. The transmembrane protein (TM) acts as a class I viral fusion protein. Under the current model, the protein has at least 3 conformational states: pre-fusion native state, pre-hairpin intermediate state, and post-fusion hairpin state. During viral and target cell membrane fusion, the coiled coil regions (heptad repeats) assume a trimer-of-hairpins structure, positioning the fusion peptide in close proximity to the C-terminal region of the ectodomain. The formation of this structure appears to drive apposition and subsequent fusion of viral and target cell membranes. Membranes fusion leads to delivery of the nucleocapsid into the cytoplasm. The protein is Envelope glycoprotein (env) of Bovine leukemia virus (isolate Belgium LB59) (BLV).